The sequence spans 451 residues: Trigger factor (451 aa).

The 82-residue stretch at 162–243 (GDYAIIDITT…VQQSKERKLP (82 aa)) folds into the PPIase FKBP-type domain.

It belongs to the FKBP-type PPIase family. Tig subfamily.

The protein resides in the cytoplasm. The enzyme catalyses [protein]-peptidylproline (omega=180) = [protein]-peptidylproline (omega=0). Its function is as follows. Involved in protein export. Acts as a chaperone by maintaining the newly synthesized protein in an open conformation. Functions as a peptidyl-prolyl cis-trans isomerase. This is Trigger factor from Corynebacterium aurimucosum (strain ATCC 700975 / DSM 44827 / CIP 107346 / CN-1) (Corynebacterium nigricans).